A 441-amino-acid polypeptide reads, in one-letter code: Glutamate-1-semialdehyde 2,1-aminomutase (441 aa).

N6-(pyridoxal phosphate)lysine is present on lysine 270.

Belongs to the class-III pyridoxal-phosphate-dependent aminotransferase family. HemL subfamily. Homodimer. Requires pyridoxal 5'-phosphate as cofactor.

It is found in the cytoplasm. It catalyses the reaction (S)-4-amino-5-oxopentanoate = 5-aminolevulinate. It functions in the pathway porphyrin-containing compound metabolism; protoporphyrin-IX biosynthesis; 5-aminolevulinate from L-glutamyl-tRNA(Glu): step 2/2. The polypeptide is Glutamate-1-semialdehyde 2,1-aminomutase (hemL) (Propionibacterium freudenreichii subsp. freudenreichii).